Reading from the N-terminus, the 143-residue chain is Putative cytokinin riboside 5'-monophosphate phosphoribohydrolase LOG9 (143 aa).

Substrate contacts are provided by residues 23 to 24 (RK), 41 to 47 (RYETMEE), and threonine 53.

Belongs to the LOG family.

The enzyme catalyses N(6)-(dimethylallyl)adenosine 5'-phosphate + H2O = N(6)-dimethylallyladenine + D-ribose 5-phosphate. It catalyses the reaction 9-ribosyl-trans-zeatin 5'-phosphate + H2O = trans-zeatin + D-ribose 5-phosphate. Functionally, cytokinin-activating enzyme working in the direct activation pathway. Phosphoribohydrolase that converts inactive cytokinin nucleotides to the biologically active free-base forms. This chain is Putative cytokinin riboside 5'-monophosphate phosphoribohydrolase LOG9 (LOG9), found in Arabidopsis thaliana (Mouse-ear cress).